Here is a 442-residue protein sequence, read N- to C-terminus: UDP-N-acetylmuramate--L-alanine ligase (442 aa).

Residue G110–S116 coordinates ATP.

The protein belongs to the MurCDEF family.

The protein localises to the cytoplasm. It catalyses the reaction UDP-N-acetyl-alpha-D-muramate + L-alanine + ATP = UDP-N-acetyl-alpha-D-muramoyl-L-alanine + ADP + phosphate + H(+). It participates in cell wall biogenesis; peptidoglycan biosynthesis. Functionally, cell wall formation. In Streptococcus thermophilus (strain ATCC BAA-491 / LMD-9), this protein is UDP-N-acetylmuramate--L-alanine ligase.